The sequence spans 265 residues: Ribosomal RNA small subunit methyltransferase A (265 aa).

S-adenosyl-L-methionine-binding residues include histidine 17, leucine 19, glycine 44, glutamate 65, aspartate 90, and asparagine 112.

It belongs to the class I-like SAM-binding methyltransferase superfamily. rRNA adenine N(6)-methyltransferase family. RsmA subfamily.

It is found in the cytoplasm. It carries out the reaction adenosine(1518)/adenosine(1519) in 16S rRNA + 4 S-adenosyl-L-methionine = N(6)-dimethyladenosine(1518)/N(6)-dimethyladenosine(1519) in 16S rRNA + 4 S-adenosyl-L-homocysteine + 4 H(+). In terms of biological role, specifically dimethylates two adjacent adenosines (A1518 and A1519) in the loop of a conserved hairpin near the 3'-end of 16S rRNA in the 30S particle. May play a critical role in biogenesis of 30S subunits. This is Ribosomal RNA small subunit methyltransferase A from Xylella fastidiosa (strain Temecula1 / ATCC 700964).